A 224-amino-acid polypeptide reads, in one-letter code: MRRDERWDGVYSFEDSPFIMEILTELRDKNTDSIAFRKGLVKLGRYMGYELTKTMDVEEIEVETPLEKTRGILVKDRRNVVIITVLRAAIPLMEGLIKVFEHARVGIVSASRGKAPKFEIEMNYIKIPTVKPDDTVIVADPMIATGSTLIRVLKEVSKYGRPKRLIILGVLAAPEGISRIKEAFPEAEIFVAKVDRELNEKGYILPGLGDAGDRAFGAPLKSPR.

Position 38 to 42 (38 to 42 (KGLVK)) interacts with GTP. Residues arginine 87, arginine 112, and 140 to 148 (DPMIATGST) contribute to the 5-phospho-alpha-D-ribose 1-diphosphate site. Residues isoleucine 204 and 209 to 211 (GDA) contribute to the uracil site. Aspartate 210 lines the 5-phospho-alpha-D-ribose 1-diphosphate pocket.

It belongs to the UPRTase family. The cofactor is Mg(2+).

It catalyses the reaction UMP + diphosphate = 5-phospho-alpha-D-ribose 1-diphosphate + uracil. It functions in the pathway pyrimidine metabolism; UMP biosynthesis via salvage pathway; UMP from uracil: step 1/1. With respect to regulation, allosterically activated by GTP. Functionally, catalyzes the conversion of uracil and 5-phospho-alpha-D-ribose 1-diphosphate (PRPP) to UMP and diphosphate. This chain is Uracil phosphoribosyltransferase, found in Thermococcus gammatolerans (strain DSM 15229 / JCM 11827 / EJ3).